We begin with the raw amino-acid sequence, 467 residues long: F-box/kelch-repeat protein SKIP11 (467 aa).

Positions 77–117 (LSGGEEQADAAIGDGSSSRQEQEQQSDFNDNGGDSSDSHSL) are disordered. Residues 92–111 (SSSRQEQEQQSDFNDNGGDS) show a composition bias toward low complexity. The 48-residue stretch at 116–163 (SLINEIGRDNSIDCLIRCSRSDYGSIASLNRNFRSLVKSGEIYRLRRQ) folds into the F-box domain. 5 Kelch repeats span residues 159 to 210 (RLRR…KESL), 215 to 259 (DLLV…SLGE), 261 to 307 (AIFA…FMDG), 308 to 356 (KFYV…DMSP), and 365 to 411 (AVVN…GLAF).

In terms of assembly, part of a SCF (ASK-cullin-F-box) protein ligase complex. Interacts with SKP1A/ASK1 and SPK1B/ASK2.

Its subcellular location is the nucleus. It functions in the pathway protein modification; protein ubiquitination. Its function is as follows. Component of SCF(ASK-cullin-F-box) E3 ubiquitin ligase complexes, which may mediate the ubiquitination and subsequent proteasomal degradation of target proteins. The sequence is that of F-box/kelch-repeat protein SKIP11 (SKIP11) from Arabidopsis thaliana (Mouse-ear cress).